The chain runs to 466 residues: Methylenetetrahydrofolate--tRNA-(uracil-5-)-methyltransferase TrmFO (466 aa).

16-21 (GGGMAG) is a binding site for FAD.

The protein belongs to the MnmG family. TrmFO subfamily. FAD is required as a cofactor.

It is found in the cytoplasm. It carries out the reaction uridine(54) in tRNA + (6R)-5,10-methylene-5,6,7,8-tetrahydrofolate + NADH + H(+) = 5-methyluridine(54) in tRNA + (6S)-5,6,7,8-tetrahydrofolate + NAD(+). The catalysed reaction is uridine(54) in tRNA + (6R)-5,10-methylene-5,6,7,8-tetrahydrofolate + NADPH + H(+) = 5-methyluridine(54) in tRNA + (6S)-5,6,7,8-tetrahydrofolate + NADP(+). In terms of biological role, catalyzes the folate-dependent formation of 5-methyl-uridine at position 54 (M-5-U54) in all tRNAs. This Maricaulis maris (strain MCS10) (Caulobacter maris) protein is Methylenetetrahydrofolate--tRNA-(uracil-5-)-methyltransferase TrmFO.